The chain runs to 188 residues: Elongation factor P (188 aa).

It belongs to the elongation factor P family.

It is found in the cytoplasm. It functions in the pathway protein biosynthesis; polypeptide chain elongation. Its function is as follows. Involved in peptide bond synthesis. Stimulates efficient translation and peptide-bond synthesis on native or reconstituted 70S ribosomes in vitro. Probably functions indirectly by altering the affinity of the ribosome for aminoacyl-tRNA, thus increasing their reactivity as acceptors for peptidyl transferase. This Chlorobaculum tepidum (strain ATCC 49652 / DSM 12025 / NBRC 103806 / TLS) (Chlorobium tepidum) protein is Elongation factor P.